Here is a 242-residue protein sequence, read N- to C-terminus: MKTVTIITIIVVIIVVILIIMVLSKSCVSHFRNVGSLNSRDVNLKDDFSYANIDDPYNKPFVLNNLINPTKCQEIMQFANGKLFDSQVLSGTDKNIRNSQQMWISKNNPMVKPIFENICRQFNVPFDNAEDLQVVRYLPNQYYNEHHDSCCDSSKQCSEFIERGGQRILTVLIYLNNEFSDGHTYFPNLNQKFKPKTGDALVFYPLANNSNKCHPYSLHAGMPVTSGEKWIANLWFRERKFS.

Residues 128-238 (NAEDLQVVRY…KWIANLWFRE (111 aa)) enclose the Fe2OG dioxygenase domain.

Belongs to the P4HA family. It depends on Fe cation as a cofactor. L-ascorbate is required as a cofactor.

It localises to the virion. The enzyme catalyses L-prolyl-[collagen] + 2-oxoglutarate + O2 = trans-4-hydroxy-L-prolyl-[collagen] + succinate + CO2. Its function is as follows. May catalyze the post-translational formation of 4-hydroxyproline in -Xaa-Pro-Gly- sequences in the 6 collagen-like proteins of Mimivirus. The polypeptide is Putative prolyl 4-hydroxylase (Acanthamoeba polyphaga mimivirus (APMV)).